Here is a 408-residue protein sequence, read N- to C-terminus: Aurora kinase A-B (408 aa).

The segment covering Met-1–Lys-10 has biased composition (basic and acidic residues). The interval Met-1–Glu-128 is disordered. The segment covering Gly-85–Asn-110 has biased composition (polar residues). The Protein kinase domain occupies Phe-140–Ile-390. ATP is bound by residues Lys-150, Lys-169, and Leu-217–Ala-220. Asp-263 (proton acceptor) is an active-site residue. Asp-281 lines the ATP pocket. Residues His-287–Leu-300 form an activation segment region.

It belongs to the protein kinase superfamily. Ser/Thr protein kinase family. Aurora subfamily. Interacts with kif2c and kif11. In terms of processing, phosphorylated. Autophosphorylated on a serine residue.

The protein resides in the cytoplasm. The protein localises to the cytoskeleton. It is found in the spindle pole. It localises to the microtubule organizing center. Its subcellular location is the centrosome. The enzyme catalyses L-seryl-[protein] + ATP = O-phospho-L-seryl-[protein] + ADP + H(+). It catalyses the reaction L-threonyl-[protein] + ATP = O-phospho-L-threonyl-[protein] + ADP + H(+). Mitotic serine/threonine kinases that contributes to the regulation of cell cycle progression. Associates with the centrosome and the spindle microtubules during mitosis and plays a critical role in various mitotic events including the establishment of mitotic spindle, centrosome duplication, centrosome separation as well as maturation, chromosomal alignment, spindle assembly checkpoint, and cytokinesis. Phosphorylates numerous target proteins. Important for microtubule formation and/or stabilization. This Xenopus laevis (African clawed frog) protein is Aurora kinase A-B (aurka-b).